The sequence spans 259 residues: uncharacterized protein (259 aa).

This is an uncharacterized protein from Methanocaldococcus jannaschii (strain ATCC 43067 / DSM 2661 / JAL-1 / JCM 10045 / NBRC 100440) (Methanococcus jannaschii).